The primary structure comprises 86 residues: Toxin Tpa6 (86 aa).

A signal peptide spans 1–20 (MSIFPIALALLLIGLEEGEA). Residues 22–85 (RDGYPLSKNN…WGDPGTKPCM (64 aa)) form the LCN-type CS-alpha/beta domain. 4 disulfide bridges follow: Cys-33–Cys-84, Cys-37–Cys-58, Cys-43–Cys-64, and Cys-47–Cys-66.

This sequence belongs to the long (4 C-C) scorpion toxin superfamily. Sodium channel inhibitor family. Beta subfamily. As to expression, expressed by the venom gland.

It localises to the secreted. Its function is as follows. Beta toxins bind voltage-independently at site-4 of sodium channels (Nav) and shift the voltage of activation toward more negative potentials thereby affecting sodium channel activation and promoting spontaneous and repetitive firing. The protein is Toxin Tpa6 of Tityus pachyurus (Colombian scorpion).